The chain runs to 449 residues: Probable hexaprenyl pyrophosphate synthase, mitochondrial (449 aa).

Lys-122, Arg-125, and His-200 together coordinate isopentenyl diphosphate. Positions 207 and 211 each coordinate Mg(2+). An all-trans-polyprenyl diphosphate is bound at residue Arg-216. An isopentenyl diphosphate-binding site is contributed by Arg-217. Residues Lys-300, Thr-301, Gln-338, and Lys-355 each coordinate an all-trans-polyprenyl diphosphate.

Belongs to the FPP/GGPP synthase family. It depends on Mg(2+) as a cofactor.

It localises to the mitochondrion. Its pathway is cofactor biosynthesis; ubiquinone biosynthesis. In terms of biological role, assembly of polyisoprenoid side chains. The polyprenyl synthase of coenzyme Q biosynthesis catalyzes the formation from isopentenyl diphosphate of all trans-polyprenyl pyrophosphates generally ranging in length of between 6 and 10 isoprene units depending on the species. This Neurospora crassa (strain ATCC 24698 / 74-OR23-1A / CBS 708.71 / DSM 1257 / FGSC 987) protein is Probable hexaprenyl pyrophosphate synthase, mitochondrial.